A 123-amino-acid chain; its full sequence is Large ribosomal subunit protein uL18 (123 aa).

This sequence belongs to the universal ribosomal protein uL18 family. Part of the 50S ribosomal subunit; part of the 5S rRNA/L5/L18/L25 subcomplex. Contacts the 5S and 23S rRNAs.

Functionally, this is one of the proteins that bind and probably mediate the attachment of the 5S RNA into the large ribosomal subunit, where it forms part of the central protuberance. This chain is Large ribosomal subunit protein uL18, found in Chlamydia felis (strain Fe/C-56) (Chlamydophila felis).